We begin with the raw amino-acid sequence, 270 residues long: uncharacterized protein (270 aa).

This is an uncharacterized protein from Escherichia coli (strain K12).